A 111-amino-acid polypeptide reads, in one-letter code: SPbeta prophage-derived uncharacterized protein YolC (111 aa).

The N-terminal stretch at 1 to 25 (MKKRLIGFLVLVPALIMSGITLIEA) is a signal peptide.

The chain is SPbeta prophage-derived uncharacterized protein YolC (yolC) from Bacillus subtilis (strain 168).